Consider the following 78-residue polypeptide: Large ribosomal subunit protein bL28 (78 aa).

Belongs to the bacterial ribosomal protein bL28 family.

The protein is Large ribosomal subunit protein bL28 of Hamiltonella defensa subsp. Acyrthosiphon pisum (strain 5AT).